The primary structure comprises 699 residues: Elongation factor G (699 aa).

The tr-type G domain maps to 8–290 (NRYRNIGICA…AVIEFLPAPD (283 aa)). Residues 17–24 (AHVDAGKT), 88–92 (DTPGH), and 142–145 (NKMD) each bind GTP.

Belongs to the TRAFAC class translation factor GTPase superfamily. Classic translation factor GTPase family. EF-G/EF-2 subfamily.

Its subcellular location is the cytoplasm. Catalyzes the GTP-dependent ribosomal translocation step during translation elongation. During this step, the ribosome changes from the pre-translocational (PRE) to the post-translocational (POST) state as the newly formed A-site-bound peptidyl-tRNA and P-site-bound deacylated tRNA move to the P and E sites, respectively. Catalyzes the coordinated movement of the two tRNA molecules, the mRNA and conformational changes in the ribosome. The protein is Elongation factor G of Alcanivorax borkumensis (strain ATCC 700651 / DSM 11573 / NCIMB 13689 / SK2).